The sequence spans 232 residues: Large ribosomal subunit protein uL1 (232 aa).

This sequence belongs to the universal ribosomal protein uL1 family. As to quaternary structure, part of the 50S ribosomal subunit.

In terms of biological role, binds directly to 23S rRNA. The L1 stalk is quite mobile in the ribosome, and is involved in E site tRNA release. Its function is as follows. Protein L1 is also a translational repressor protein, it controls the translation of the L11 operon by binding to its mRNA. This is Large ribosomal subunit protein uL1 from Methylorubrum populi (strain ATCC BAA-705 / NCIMB 13946 / BJ001) (Methylobacterium populi).